A 428-amino-acid polypeptide reads, in one-letter code: MKVRYFGTDGIRGVFGDTLTDELAFKVGKALGEIVGEGKVLIGKDTRVSGDSLEAALAAGLTSMGVDVLSCGILPTPAVALLTRITRSYGVVISASHNPPEYNGIKVLKNGYKIPDELEEEIERRMEGEFQRRYVVGKIKSFREGKDMYIGAVLEMFKDLDLSGKSVSLDLANGATTTTAKDVFEFLGAEVEVFNSSQDGLLINQGCGATHPKFLAEEMKRGRIGFSFDGDGDRVIAVDEERNVVNGDKIIGILAEGMMEEGRLRESVVVGTIMTNGGLEEYLRKRGIELVRTKVGDKYVLEEMLKSGANLGGERSGHIIILDRSTTGDGLITALELMRVVERLKKNLSDLAKEIPDLPQITRNVRRTEKTSLENGRLRELIERYSAEGYRIVVRPSGTEPVVRITVEGKDRNRVEEIAEELSRILEG.

Residue serine 96 is the Phosphoserine intermediate of the active site. Mg(2+) contacts are provided by serine 96, aspartate 229, aspartate 231, and aspartate 233. At serine 96 the chain carries Phosphoserine.

Belongs to the phosphohexose mutase family. It depends on Mg(2+) as a cofactor. Post-translationally, activated by phosphorylation.

The enzyme catalyses alpha-D-glucosamine 1-phosphate = D-glucosamine 6-phosphate. Functionally, catalyzes the conversion of glucosamine-6-phosphate to glucosamine-1-phosphate. The protein is Phosphoglucosamine mutase of Thermotoga neapolitana (strain ATCC 49049 / DSM 4359 / NBRC 107923 / NS-E).